The following is a 255-amino-acid chain: 1-(5-phosphoribosyl)-5-[(5-phosphoribosylamino)methylideneamino] imidazole-4-carboxamide isomerase (255 aa).

The active-site Proton acceptor is D8. D129 (proton donor) is an active-site residue.

This sequence belongs to the HisA/HisF family.

It localises to the cytoplasm. The catalysed reaction is 1-(5-phospho-beta-D-ribosyl)-5-[(5-phospho-beta-D-ribosylamino)methylideneamino]imidazole-4-carboxamide = 5-[(5-phospho-1-deoxy-D-ribulos-1-ylimino)methylamino]-1-(5-phospho-beta-D-ribosyl)imidazole-4-carboxamide. It participates in amino-acid biosynthesis; L-histidine biosynthesis; L-histidine from 5-phospho-alpha-D-ribose 1-diphosphate: step 4/9. This chain is 1-(5-phosphoribosyl)-5-[(5-phosphoribosylamino)methylideneamino] imidazole-4-carboxamide isomerase, found in Prochlorococcus marinus (strain MIT 9303).